A 329-amino-acid chain; its full sequence is Major outer membrane protein P.IB (329 aa).

Positions 1–19 (MKKSLIALTLAALPVAAMA) are cleaved as a signal peptide.

Belongs to the Gram-negative porin family. Homotrimer.

It localises to the cell outer membrane. In terms of biological role, serves as a slightly cation selective porin. The chain is Major outer membrane protein P.IB (porB) from Neisseria meningitidis serogroup A / serotype 4A (strain DSM 15465 / Z2491).